Here is a 426-residue protein sequence, read N- to C-terminus: MASAIFVLNLKGKVIISRDYRADIPMSVVEKFLPLKSEVEEEQGFSTPCLTHEGINYIYIHHNDVYLLALSKMNSDAMEMLVFLRKMADVFIDYFKELQEESIRDNFVLVYELLDEIMDFGFPQTTETKILQEYITQTSNTVKKHAPPPIAMTNAISWRSEGIHYRKNEVFLDVIESVNLIAAADGTVIQSEILGKVRLKCYLSGMPELRLGLNDKVLFEAAGRTIKGNTVEMEDVKFHQCVRLARFENDRTISFIPPDGEFDLMSYRMSSNVRPLIWVECESIVHSGSRIEFMVKAKAQFKKRCIANNVQIIIPVPEDADSPRFQTSNGHVQYAPEQAAMVWNIKKFAGGKEFFMRAEMGLPSVKNEDIQVQKKRPVQLKFAIPYFTTSGIQVRYLKITEPKLNYHAMPWVRYVTQNGTEYSIRQ.

The region spanning 167 to 425 (KNEVFLDVIE…TQNGTEYSIR (259 aa)) is the MHD domain.

It belongs to the adaptor complexes medium subunit family. Adaptor protein complex 1 (AP-1) is a heterotetramer composed of two large adaptins (gamma-type subunit apl4 and beta-type subunit apl2), a medium adaptin (mu-type subunit apm1) and a small adaptin (sigma-type subunit aps1). AP-1 interacts with clathrin. Interacts with sad1.

It is found in the cytoplasmic vesicle. The protein localises to the clathrin-coated vesicle membrane. The protein resides in the membrane. Its subcellular location is the clathrin-coated pit. Functionally, component of the adaptor complexes which link clathrin to receptors in coated vesicles. Clathrin-associated protein complexes are believed to interact with the cytoplasmic tails of membrane proteins, leading to their selection and concentration. The polypeptide is AP-1 complex subunit mu-1 (apm1) (Schizosaccharomyces pombe (strain 972 / ATCC 24843) (Fission yeast)).